A 614-amino-acid chain; its full sequence is Zinc finger protein 276 (614 aa).

A disordered region spans residues 1–46; that stretch reads MKRDRLGRFLSPGIARQRGGSGGGCGSGRTRGRPSRSGGTSADGAA. Positions 19 to 29 are enriched in gly residues; sequence GGSGGGCGSGR. The ZAD domain maps to 78-164; the sequence is GHCRLCHGKF…LQRVNVSPAG (87 aa). Cysteine 80, cysteine 83, cysteine 137, and cysteine 140 together coordinate Zn(2+). The disordered stretch occupies residues 271-422; it reads RLAQNSESNP…PGPKPGWKKK (152 aa). 2 stretches are compositionally biased toward polar residues: residues 272-282 and 291-302; these read LAQNSESNPTG and RETQVGSETKTL. The span at 357–369 shows a compositional bias: acidic residues; it reads SDLSEGDFLSEDE. Basic and acidic residues predominate over residues 386 to 408; it reads YPEKKVSGKKSEGREAKRPEEPK. The segment covering 409–422 has biased composition (basic residues); that stretch reads IRKKPGPKPGWKKK. 5 C2H2-type zinc fingers span residues 434 to 458, 465 to 490, 496 to 518, 524 to 546, and 554 to 577; these read YKCPYQGCTAVYRGADGMKKHIKEH, RPCPHPGCNKVFMIDRYLQRHVKLIH, YICDECGQTFKQRKHLLVHQMRH, LQCEVCGFQCRQRASLKYHMTKH, and FACDQCGRRFEKAHNLNVHMSMVH. Residues 588–614 are disordered; it reads PLEAEPPPGPLSPSGTMEGQAVKPEPT.

Found in all the examined tissues, with highest levels in kidney, liver, lung, and spleen.

It localises to the nucleus. The protein localises to the chromosome. It is found in the centromere. The protein resides in the kinetochore. Functionally, may be involved in transcriptional regulation. This chain is Zinc finger protein 276 (Znf276), found in Mus musculus (Mouse).